The primary structure comprises 418 residues: MDKLVIEGGVPLRGEVSISGAKNAALPLMAASLLACGKHSFTNVPRLRDIHTMCNLLGHMGASSEHGATLNIDSGNIRALEAPYRLVKTMRASVLVLGPMLARHGFARVSLPGGCAIGARPINLHLSGLQEMGADIELEHGYVVARADRLRGATIIFDLVTVTGTENLMMAATLARGRTILKNTAREPEVVALADYLRKMGARIEGDGSSEIVVDGVEELTPSTFRVIPDRIEAGTYIAAAGITGGCLRLTNCEPAHLEAVIQKLRAAGLTIETGEGIVDVQSNGPIRSVDIKTWPYPAFPTDMQAQFMSLMTLGNGVSLITEQIFENRFMHVLELKRLGADIELDGRNARVCGVSHLSGAPVMATDLRASASLVLAALAATGVTEITRIYHLERGYEDMDGKLSAVGARIRRQVNGS.

22–23 (KN) contributes to the phosphoenolpyruvate binding site. A UDP-N-acetyl-alpha-D-glucosamine-binding site is contributed by Arg-91. Cys-115 acts as the Proton donor in catalysis. Cys-115 is subject to 2-(S-cysteinyl)pyruvic acid O-phosphothioketal. UDP-N-acetyl-alpha-D-glucosamine is bound by residues Asp-303 and Ile-325.

The protein belongs to the EPSP synthase family. MurA subfamily.

The protein resides in the cytoplasm. It carries out the reaction phosphoenolpyruvate + UDP-N-acetyl-alpha-D-glucosamine = UDP-N-acetyl-3-O-(1-carboxyvinyl)-alpha-D-glucosamine + phosphate. It participates in cell wall biogenesis; peptidoglycan biosynthesis. Its function is as follows. Cell wall formation. Adds enolpyruvyl to UDP-N-acetylglucosamine. The sequence is that of UDP-N-acetylglucosamine 1-carboxyvinyltransferase from Syntrophobacter fumaroxidans (strain DSM 10017 / MPOB).